Consider the following 236-residue polypeptide: Ribose-5-phosphate isomerase A (236 aa).

Substrate is bound by residues 33 to 36, 90 to 93, and 103 to 106; these read TGST, DGAD, and KGGG. Residue Glu-112 is the Proton acceptor of the active site. Lys-130 contacts substrate.

This sequence belongs to the ribose 5-phosphate isomerase family. In terms of assembly, homodimer.

The enzyme catalyses aldehydo-D-ribose 5-phosphate = D-ribulose 5-phosphate. The protein operates within carbohydrate degradation; pentose phosphate pathway; D-ribose 5-phosphate from D-ribulose 5-phosphate (non-oxidative stage): step 1/1. Functionally, catalyzes the reversible conversion of ribose-5-phosphate to ribulose 5-phosphate. This chain is Ribose-5-phosphate isomerase A, found in Nostoc sp. (strain PCC 7120 / SAG 25.82 / UTEX 2576).